A 108-amino-acid polypeptide reads, in one-letter code: UPF0060 membrane protein YnfA (108 aa).

Topologically, residues 1 to 5 are periplasmic; sequence MLKTT. The helical transmembrane segment at 6–26 threads the bilayer; sequence LLFFVTALCEIIGCFLTWLWI. Residues 27-30 lie on the Cytoplasmic side of the membrane; that stretch reads KRGA. The chain crosses the membrane as a helical span at residues 31–51; sequence SVWWLLPAAASLALFVWLLTL. Residues 52 to 60 lie on the Periplasmic side of the membrane; it reads HPAASGRVY. Residues 61–81 form a helical membrane-spanning segment; that stretch reads AAYGGVYVCTALLWLRVVDGV. Topologically, residues 82–84 are cytoplasmic; sequence RLT. A helical transmembrane segment spans residues 85–105; sequence VYDWCGAPIALCGMLIIVVGW. The Periplasmic portion of the chain corresponds to 106–108; the sequence is GRT.

It belongs to the UPF0060 family.

The protein localises to the cell inner membrane. This Salmonella dublin (strain CT_02021853) protein is UPF0060 membrane protein YnfA.